A 233-amino-acid polypeptide reads, in one-letter code: Fibrillarin-like rRNA/tRNA 2'-O-methyltransferase (233 aa).

Residues 89–90, 108–109, 133–134, and 153–156 each bind S-adenosyl-L-methionine; these read TT, EF, DA, and DIAQ.

Belongs to the methyltransferase superfamily. Fibrillarin family. Interacts with nop5. Component of box C/D small ribonucleoprotein (sRNP) particles that contain rpl7ae, FlpA and nop5, plus a guide RNA.

Functionally, involved in pre-rRNA and tRNA processing. Utilizes the methyl donor S-adenosyl-L-methionine to catalyze the site-specific 2'-hydroxyl methylation of ribose moieties in rRNA and tRNA. Site specificity is provided by a guide RNA that base pairs with the substrate. Methylation occurs at a characteristic distance from the sequence involved in base pairing with the guide RNA. This Sulfurisphaera tokodaii (strain DSM 16993 / JCM 10545 / NBRC 100140 / 7) (Sulfolobus tokodaii) protein is Fibrillarin-like rRNA/tRNA 2'-O-methyltransferase.